A 115-amino-acid polypeptide reads, in one-letter code: NADH-ubiquinone oxidoreductase chain 3 (115 aa).

3 helical membrane-spanning segments follow: residues 5–25 (LTFM…FWLP), 55–75 (FFLV…LLPL), and 86–106 (LMLT…AYEW).

The protein belongs to the complex I subunit 3 family. As to quaternary structure, core subunit of respiratory chain NADH dehydrogenase (Complex I) which is composed of 45 different subunits. Interacts with TMEM186. Interacts with TMEM242.

Its subcellular location is the mitochondrion inner membrane. The enzyme catalyses a ubiquinone + NADH + 5 H(+)(in) = a ubiquinol + NAD(+) + 4 H(+)(out). Its function is as follows. Core subunit of the mitochondrial membrane respiratory chain NADH dehydrogenase (Complex I) which catalyzes electron transfer from NADH through the respiratory chain, using ubiquinone as an electron acceptor. Essential for the catalytic activity of complex I. This chain is NADH-ubiquinone oxidoreductase chain 3, found in Avahi unicolor (Sambirano woolly lemur).